Here is a 448-residue protein sequence, read N- to C-terminus: Bifunctional F420 biosynthesis protein FbiB (448 aa).

Positions Met-1 to Gly-244 are coenzyme F420:L-glutamate ligase. Residues Leu-20–Phe-23, Ser-50, and Lys-55 contribute to the GTP site. Position 109 (Asp-109) interacts with a divalent metal cation. A GTP-binding site is contributed by Asn-112. Positions 150 and 151 each coordinate a divalent metal cation. Residues Thr-245–Lys-448 form a dehydro-coenzyme F420-0 reductase region. Residues Arg-260 to Arg-264 and Ala-288 each bind FMN. Asp-320 is a binding site for coenzyme F420-(gamma-Glu)n. Gly-399 and Arg-436 together coordinate FMN.

The protein in the N-terminal section; belongs to the CofE family. Mg(2+) is required as a cofactor. Mn(2+) serves as cofactor. The cofactor is K(+).

The enzyme catalyses oxidized coenzyme F420-0 + GTP + L-glutamate = oxidized coenzyme F420-1 + GDP + phosphate + H(+). It catalyses the reaction oxidized coenzyme F420-1 + GTP + L-glutamate = oxidized coenzyme F420-2 + GDP + phosphate + H(+). It carries out the reaction oxidized coenzyme F420-(gamma-L-Glu)(n) + GTP + L-glutamate = oxidized coenzyme F420-(gamma-L-Glu)(n+1) + GDP + phosphate + H(+). The catalysed reaction is oxidized coenzyme F420-0 + FMN + H(+) = dehydro coenzyme F420-0 + FMNH2. The protein operates within cofactor biosynthesis; coenzyme F420 biosynthesis. In terms of biological role, bifunctional enzyme that catalyzes the GTP-dependent successive addition of multiple gamma-linked L-glutamates to the L-lactyl phosphodiester of 7,8-didemethyl-8-hydroxy-5-deazariboflavin (F420-0) to form polyglutamated F420 derivatives, and the FMNH2-dependent reduction of dehydro-F420-0 to form F420-0. The chain is Bifunctional F420 biosynthesis protein FbiB from Mycobacterium tuberculosis (strain ATCC 25177 / H37Ra).